The chain runs to 675 residues: UvrABC system protein B (675 aa).

The Helicase ATP-binding domain maps to 32–417; it reads EGLSDGLAYQ…EHAGQVVEQV (386 aa). ATP is bound at residue 45-52; it reads GVTGSGKT. The Beta-hairpin signature appears at 98–121; that stretch reads YYDYYQPEAYVPSRDLFIEKDSAI. The 167-residue stretch at 436-602 folds into the Helicase C-terminal domain; the sequence is QVDDLMSEIN…QIKKQVKDII (167 aa). In terms of domain architecture, UVR spans 634-669; sequence IKEIAKLEKAMQQAARDLQFEEAAVLRDRISNIKEN.

Belongs to the UvrB family. In terms of assembly, forms a heterotetramer with UvrA during the search for lesions. Interacts with UvrC in an incision complex.

The protein resides in the cytoplasm. Its function is as follows. The UvrABC repair system catalyzes the recognition and processing of DNA lesions. A damage recognition complex composed of 2 UvrA and 2 UvrB subunits scans DNA for abnormalities. Upon binding of the UvrA(2)B(2) complex to a putative damaged site, the DNA wraps around one UvrB monomer. DNA wrap is dependent on ATP binding by UvrB and probably causes local melting of the DNA helix, facilitating insertion of UvrB beta-hairpin between the DNA strands. Then UvrB probes one DNA strand for the presence of a lesion. If a lesion is found the UvrA subunits dissociate and the UvrB-DNA preincision complex is formed. This complex is subsequently bound by UvrC and the second UvrB is released. If no lesion is found, the DNA wraps around the other UvrB subunit that will check the other stand for damage. This chain is UvrABC system protein B, found in Neisseria gonorrhoeae (strain ATCC 700825 / FA 1090).